Reading from the N-terminus, the 397-residue chain is Elongation factor Tu (397 aa).

The tr-type G domain occupies 10 to 206 (KPHVNIGTIG…ACDDYIPEPV (197 aa)). The tract at residues 19–26 (GHIDHGKT) is G1. 19–26 (GHIDHGKT) is a binding site for GTP. Threonine 26 is a Mg(2+) binding site. The tract at residues 62-66 (GITIS) is G2. A G3 region spans residues 83 to 86 (DCPG). Residues 83-87 (DCPGH) and 138-141 (NKAD) contribute to the GTP site. Positions 138-141 (NKAD) are G4. Residues 176-178 (SAL) are G5.

This sequence belongs to the TRAFAC class translation factor GTPase superfamily. Classic translation factor GTPase family. EF-Tu/EF-1A subfamily. As to quaternary structure, monomer.

Its subcellular location is the cytoplasm. The catalysed reaction is GTP + H2O = GDP + phosphate + H(+). Its function is as follows. GTP hydrolase that promotes the GTP-dependent binding of aminoacyl-tRNA to the A-site of ribosomes during protein biosynthesis. The sequence is that of Elongation factor Tu from Acidothermus cellulolyticus (strain ATCC 43068 / DSM 8971 / 11B).